The chain runs to 46 residues: Endochitinase 1A (46 aa).

The protein belongs to the glycosyl hydrolase 19 family. Chitinase class I subfamily.

It catalyses the reaction Random endo-hydrolysis of N-acetyl-beta-D-glucosaminide (1-&gt;4)-beta-linkages in chitin and chitodextrins.. Defense against chitin-containing fungal and bacterial pathogens. This Arachis hypogaea (Peanut) protein is Endochitinase 1A.